Consider the following 215-residue polypeptide: Ras-related protein Rab-14 (215 aa).

Ala-2 is subject to N-acetylalanine. Residues Gly-21, Val-22, Gly-23, Lys-24, Ser-25, Cys-26, Ala-38, Asp-39, Cys-40, His-42, and Thr-43 each contribute to the GTP site. Residue Ser-25 participates in Mg(2+) binding. A Switch 1 motif is present at residues 42-47 (HTIGVE). The Mg(2+) site is built by Thr-43 and Asp-66. The short motif at 68-77 (AGQERFRAVT) is the Switch 2 element. Positions 69, 124, 125, 127, 155, and 156 each coordinate GTP. Positions 188–215 (SGVQHKPSAPQGGRLTSEPQPQREGCGC) are disordered. 2 S-geranylgeranyl cysteine lipidation sites follow: Cys-213 and Cys-215. A Cysteine methyl ester modification is found at Cys-215.

This sequence belongs to the small GTPase superfamily. Rab family. In terms of assembly, interacts with ZFYVE20. Interacts with KIF16B. Interacts (GTP-bound form) with RUFY1; the interaction recruits RUFY1 onto endosomal membranes. Interacts (GTP-bound form) with RAB11FIP1 (via its C-terminus); the interactions doesn't mediate RAB11FIP1 rectruitment to membranes. Interacts with RAB11FIP2. The cofactor is Mg(2+).

It is found in the recycling endosome. The protein resides in the early endosome membrane. It localises to the golgi apparatus membrane. Its subcellular location is the golgi apparatus. The protein localises to the trans-Golgi network membrane. It is found in the cytoplasmic vesicle. The protein resides in the phagosome. It carries out the reaction GTP + H2O = GDP + phosphate + H(+). With respect to regulation, regulated by guanine nucleotide exchange factors (GEFs) including DENND6A and DENND6B which promote the exchange of bound GDP for free GTP. Regulated by GTPase activating proteins (GAPs) which increase the GTP hydrolysis activity. Inhibited by GDP dissociation inhibitors (GDIs) which prevent Rab-GDP dissociation. In terms of biological role, the small GTPases Rab are key regulators of intracellular membrane trafficking, from the formation of transport vesicles to their fusion with membranes. Rabs cycle between an inactive GDP-bound form and an active GTP-bound form that is able to recruit to membranes different set of downstream effectors directly responsible for vesicle formation, movement, tethering and fusion. Involved in membrane trafficking between the Golgi complex and endosomes during early embryonic development. Regulates the Golgi to endosome transport of FGFR-containing vesicles during early development, a key process for developing basement membrane and epiblast and primitive endoderm lineages during early postimplantation development. May act by modulating the kinesin KIF16B-cargo association to endosomes. Regulates, together with its guanine nucleotide exchange factor DENND6A, the specific endocytic transport of ADAM10, N-cadherin/CDH2 shedding and cell-cell adhesion. Mediates endosomal tethering and fusion through the interaction with RUFY1 and RAB4B. Interaction with RAB11FIP1 may function in the process of neurite formation. This chain is Ras-related protein Rab-14 (RAB14), found in Sus scrofa (Pig).